Reading from the N-terminus, the 1014-residue chain is Klotho (1014 aa).

A signal peptide spans 1–34; sequence MPARAPPRRLPRLLLLRLLSLHLLLLTLRARCLS. Topologically, residues 35–983 are extracellular; sequence AEPGQGAQTW…GCGFFQTRKS (949 aa). Glycosyl hydrolase-1 stretches follow at residues 59 to 508 and 517 to 955; these read LHDT…NNGF and LEGT…NNGF. N-linked (GlcNAc...) asparagine glycosylation is found at Asn161, Asn285, Asn346, Asn609, Asn614, and Asn696. A helical transmembrane segment spans residues 984–1004; that stretch reads LLAFISFLVFAFVTSLALIYY. The Cytoplasmic segment spans residues 1005-1014; the sequence is YSKKGRRRYK.

It belongs to the glycosyl hydrolase 1 family. Klotho subfamily. As to quaternary structure, homodimer. Interacts with FGF23 and FGFR1. N-glycosylated. In terms of tissue distribution, present in cortical renal tubules and the parathyroid (at protein level). Strongly expressed in kidney. Expressed at low levels in brain, lung, intestine and ovaries.

It localises to the cell membrane. Its subcellular location is the apical cell membrane. It is found in the secreted. It carries out the reaction a beta-D-glucuronoside + H2O = D-glucuronate + an alcohol. Functionally, may have weak glycosidase activity towards glucuronylated steroids. However, it lacks essential active site Glu residues at positions 241 and 874, suggesting it may be inactive as a glycosidase in vivo. May be involved in the regulation of calcium and phosphorus homeostasis by inhibiting the synthesis of active vitamin D. Essential factor for the specific interaction between FGF23 and FGFR1. The Klotho peptide generated by cleavage of the membrane-bound isoform may be an anti-aging circulating hormone which would extend life span by inhibiting insulin/IGF1 signaling. This Rattus norvegicus (Rat) protein is Klotho (Kl).